The primary structure comprises 806 residues: Phenylalanine--tRNA ligase beta subunit (806 aa).

One can recognise a tRNA-binding domain in the interval 40-155 (NKGVKGVVVG…SDAEVGADAL (116 aa)). Positions 409 to 484 (VQERTVSVTA…RLYGYDHIPV (76 aa)) constitute a B5 domain. Residues aspartate 462, aspartate 468, glutamate 471, and glutamate 472 each coordinate Mg(2+). The FDX-ACB domain occupies 712–805 (PRFPSMTRDM…VEEKFGAELR (94 aa)).

It belongs to the phenylalanyl-tRNA synthetase beta subunit family. Type 1 subfamily. In terms of assembly, tetramer of two alpha and two beta subunits. Requires Mg(2+) as cofactor.

The protein resides in the cytoplasm. The enzyme catalyses tRNA(Phe) + L-phenylalanine + ATP = L-phenylalanyl-tRNA(Phe) + AMP + diphosphate + H(+). The sequence is that of Phenylalanine--tRNA ligase beta subunit from Bacillus cereus (strain ATCC 14579 / DSM 31 / CCUG 7414 / JCM 2152 / NBRC 15305 / NCIMB 9373 / NCTC 2599 / NRRL B-3711).